Here is a 437-residue protein sequence, read N- to C-terminus: F-box only protein 9 (437 aa).

Residues 1-29 are disordered; that stretch reads MAEAEEDCHSEAVREGDDDDENESPAETD. Residues 16–26 are compositionally biased toward acidic residues; it reads GDDDDENESPA. The stretch at 84-117 is one TPR repeat; it reads ARELFLKAVEEEQNGALYEAIKFYRRAMQLVPDI. S126 bears the Phosphoserine mark. One can recognise an F-box domain in the interval 175 to 226; sequence QTHISALPMEVLMYVFRWVVSSDLDLRSLEQLSQVCRGFYICARDPEIWRLA.

As to quaternary structure, part of the SCF (SKP1-CUL1-F-box) E3 ubiquitin-protein ligase complex SCF(FBXO9) composed of CUL1, SKP1, RBX1 and FBXO9. Interacts with TTI1 and TELO2; when TTI1 and TELO2 are phosphorylated by CK2.

The protein resides in the cytoplasm. It functions in the pathway protein modification; protein ubiquitination. Substrate recognition component of a SCF (SKP1-CUL1-F-box protein) E3 ubiquitin-protein ligase complex which mediates the ubiquitination and subsequent proteasomal degradation of target proteins and plays a role in several biological processes such as cell cycle, cell proliferation, or maintenance of chromosome stability. Ubiquitinates mTORC1-bound TTI1 and TELO2 when they are phosphorylated by CK2 following growth factor deprivation, leading to their degradation. In contrast, does not mediate ubiquitination of TTI1 and TELO2 when they are part of the mTORC2 complex. As a consequence, mTORC1 is inactivated to restrain cell growth and protein translation, while mTORC2 is the activated due to the relief of feedback inhibition by mTORC1. Plays a role in maintaining epithelial cell survival by regulating the turn-over of chromatin modulator PRMT4 through ubiquitination and degradation by the proteasomal pathway. Also regulates PPARgamma stability by facilitating PPARgamma/PPARG ubiquitination and thereby plays a role in adipocyte differentiation. In Bos taurus (Bovine), this protein is F-box only protein 9 (FBXO9).